Consider the following 83-residue polypeptide: Alpha-neurotoxin NTX-3 (83 aa).

An N-terminal signal peptide occupies residues 1–21 (MKTLLLTLLVVTIVCLDLGYT). Cystine bridges form between Cys24-Cys45, Cys38-Cys62, Cys64-Cys75, and Cys76-Cys81.

Belongs to the three-finger toxin family. Short-chain subfamily. Type I alpha-neurotoxin sub-subfamily. As to expression, expressed by the venom gland.

It localises to the secreted. Functionally, binds to muscle nicotinic acetylcholine receptor (nAChR) and inhibit acetylcholine from binding to the receptor, thereby impairing neuromuscular transmission. The protein is Alpha-neurotoxin NTX-3 of Naja sputatrix (Malayan spitting cobra).